The sequence spans 363 residues: Electron transfer flavoprotein subunit alpha, mitochondrial (363 aa).

The N-terminal 24 residues, 1–24 (MTRTVLLRALTKNKFVASNAPRSI), are a transit peptide targeting the mitochondrion. An FAD-binding site is contributed by 303–331 (LYMAFGVSGAIQHLAGIKDSKVIVAVNKD).

It belongs to the ETF alpha-subunit/FixB family. Heterodimer of an alpha and a beta subunit. The cofactor is FAD.

The protein localises to the mitochondrion matrix. Functionally, the electron transfer flavoprotein serves as a specific electron acceptor for several dehydrogenases, including five acyl-CoA dehydrogenases, glutaryl-CoA and sarcosine dehydrogenase. It transfers the electrons to the main mitochondrial respiratory chain via ETF-ubiquinone oxidoreductase (ETF dehydrogenase). Involved in leucine catabolism and in phytol degradation. This is Electron transfer flavoprotein subunit alpha, mitochondrial (ETFA) from Arabidopsis thaliana (Mouse-ear cress).